Consider the following 497-residue polypeptide: Probable cytosol aminopeptidase (497 aa).

Residues Lys-263 and Asp-268 each coordinate Mn(2+). Lys-275 is an active-site residue. Mn(2+) is bound by residues Asp-286, Asp-345, and Glu-347. Arg-349 is an active-site residue.

Belongs to the peptidase M17 family. Mn(2+) serves as cofactor.

Its subcellular location is the cytoplasm. The catalysed reaction is Release of an N-terminal amino acid, Xaa-|-Yaa-, in which Xaa is preferably Leu, but may be other amino acids including Pro although not Arg or Lys, and Yaa may be Pro. Amino acid amides and methyl esters are also readily hydrolyzed, but rates on arylamides are exceedingly low.. It catalyses the reaction Release of an N-terminal amino acid, preferentially leucine, but not glutamic or aspartic acids.. Functionally, presumably involved in the processing and regular turnover of intracellular proteins. Catalyzes the removal of unsubstituted N-terminal amino acids from various peptides. The polypeptide is Probable cytosol aminopeptidase (Sinorhizobium medicae (strain WSM419) (Ensifer medicae)).